Reading from the N-terminus, the 745-residue chain is UPF0508 protein YJR030C (745 aa).

This sequence belongs to the UPF0508 family.

This is UPF0508 protein YJR030C from Saccharomyces cerevisiae (strain ATCC 204508 / S288c) (Baker's yeast).